The following is a 666-amino-acid chain: Probable potassium transport system protein Kup (666 aa).

The next 12 membrane-spanning stretches (helical) occupy residues 16–36, 58–78, 100–120, 141–161, 165–185, 221–241, 253–273, 292–312, 343–363, 373–393, 399–419, and 424–444; these read GFII…LYTM, ISLI…LIAL, PWLI…GALT, IYQN…VLFG, FGTG…FSFL, IFIL…YSDL, WPFV…WILA, LTVY…QALI, LYIP…VLYF, YGLA…YYLI, PFLA…FFWA, and FMHG…VMFI.

The protein belongs to the HAK/KUP transporter (TC 2.A.72) family.

The protein localises to the cell membrane. It carries out the reaction K(+)(in) + H(+)(in) = K(+)(out) + H(+)(out). Functionally, transport of potassium into the cell. Likely operates as a K(+):H(+) symporter. This is Probable potassium transport system protein Kup from Streptococcus pyogenes serotype M18 (strain MGAS8232).